Consider the following 334-residue polypeptide: Broad-range acid phosphatase DET1 (334 aa).

The Tele-phosphohistidine intermediate role is filled by His32. Substrate-binding positions include Asn38, 44 to 45 (NG), and Arg108. The Proton donor/acceptor role is filled by Glu126. Substrate-binding positions include 168–171 (LNNT) and 195–205 (RVKDEPRIREQ). Ser248 carries the post-translational modification Phosphoserine.

It belongs to the phosphoglycerate mutase family.

It is found in the cytoplasm. The protein resides in the nucleus. Functionally, metal-independent, broad-range acid phosphatase. Involved, either directly or indirectly, in the bidirectional transport of sterols between the endoplasmic reticulum and the plasma membrane. This is Broad-range acid phosphatase DET1 (DET1) from Saccharomyces cerevisiae (strain ATCC 204508 / S288c) (Baker's yeast).